Consider the following 403-residue polypeptide: Tyrosine--tRNA ligase (403 aa).

Positions 42–51 match the 'HIGH' region motif; the sequence is PTAPDLHLGH. Residues 226 to 230 carry the 'KMSKS' region motif; the sequence is KMSKS. Lys-229 is a binding site for ATP. The S4 RNA-binding domain maps to 336–396; the sequence is MPISAVLNKA…GKKAFGRITL (61 aa).

The protein belongs to the class-I aminoacyl-tRNA synthetase family. TyrS type 2 subfamily. As to quaternary structure, homodimer.

It localises to the cytoplasm. It carries out the reaction tRNA(Tyr) + L-tyrosine + ATP = L-tyrosyl-tRNA(Tyr) + AMP + diphosphate + H(+). In terms of biological role, catalyzes the attachment of tyrosine to tRNA(Tyr) in a two-step reaction: tyrosine is first activated by ATP to form Tyr-AMP and then transferred to the acceptor end of tRNA(Tyr). The sequence is that of Tyrosine--tRNA ligase from Pseudomonas syringae pv. tomato (strain ATCC BAA-871 / DC3000).